Consider the following 313-residue polypeptide: Carbamate kinase 2 (313 aa).

The protein belongs to the carbamate kinase family.

The protein resides in the cytoplasm. It catalyses the reaction hydrogencarbonate + NH4(+) + ATP = carbamoyl phosphate + ADP + H2O + H(+). The protein operates within metabolic intermediate metabolism; carbamoyl phosphate degradation; CO(2) and NH(3) from carbamoyl phosphate: step 1/1. In Staphylococcus aureus (strain Mu50 / ATCC 700699), this protein is Carbamate kinase 2 (arcC2).